A 202-amino-acid chain; its full sequence is Urease accessory protein UreG (202 aa).

10–17 contributes to the GTP binding site; that stretch reads GPVGSGKT.

It belongs to the SIMIBI class G3E GTPase family. UreG subfamily. As to quaternary structure, homodimer. UreD, UreF and UreG form a complex that acts as a GTP-hydrolysis-dependent molecular chaperone, activating the urease apoprotein by helping to assemble the nickel containing metallocenter of UreC. The UreE protein probably delivers the nickel.

The protein localises to the cytoplasm. Facilitates the functional incorporation of the urease nickel metallocenter. This process requires GTP hydrolysis, probably effectuated by UreG. The polypeptide is Urease accessory protein UreG (Synechococcus sp. (strain JA-3-3Ab) (Cyanobacteria bacterium Yellowstone A-Prime)).